The sequence spans 260 residues: 3-methyl-2-oxobutanoate hydroxymethyltransferase (260 aa).

The Mg(2+) site is built by Asp42 and Asp81. Residues 42–43, Asp81, and Lys109 contribute to the 3-methyl-2-oxobutanoate site; that span reads DS. A Mg(2+)-binding site is contributed by Glu111. The active-site Proton acceptor is Glu178.

The protein belongs to the PanB family. Homodecamer; pentamer of dimers. Requires Mg(2+) as cofactor.

It is found in the cytoplasm. The enzyme catalyses 3-methyl-2-oxobutanoate + (6R)-5,10-methylene-5,6,7,8-tetrahydrofolate + H2O = 2-dehydropantoate + (6S)-5,6,7,8-tetrahydrofolate. The protein operates within cofactor biosynthesis; (R)-pantothenate biosynthesis; (R)-pantoate from 3-methyl-2-oxobutanoate: step 1/2. Its function is as follows. Catalyzes the reversible reaction in which hydroxymethyl group from 5,10-methylenetetrahydrofolate is transferred onto alpha-ketoisovalerate to form ketopantoate. The sequence is that of 3-methyl-2-oxobutanoate hydroxymethyltransferase from Vesicomyosocius okutanii subsp. Calyptogena okutanii (strain HA).